The primary structure comprises 341 residues: UDP-3-O-acylglucosamine N-acyltransferase (341 aa).

His-239 acts as the Proton acceptor in catalysis.

The protein belongs to the transferase hexapeptide repeat family. LpxD subfamily. In terms of assembly, homotrimer.

The enzyme catalyses a UDP-3-O-[(3R)-3-hydroxyacyl]-alpha-D-glucosamine + a (3R)-hydroxyacyl-[ACP] = a UDP-2-N,3-O-bis[(3R)-3-hydroxyacyl]-alpha-D-glucosamine + holo-[ACP] + H(+). The protein operates within bacterial outer membrane biogenesis; LPS lipid A biosynthesis. In terms of biological role, catalyzes the N-acylation of UDP-3-O-acylglucosamine using 3-hydroxyacyl-ACP as the acyl donor. Is involved in the biosynthesis of lipid A, a phosphorylated glycolipid that anchors the lipopolysaccharide to the outer membrane of the cell. This Photobacterium profundum (strain SS9) protein is UDP-3-O-acylglucosamine N-acyltransferase.